The primary structure comprises 58 residues: Preprotein translocase subunit SecG (58 aa).

The Cytoplasmic segment spans residues 1–32 (MARKRRKGGEGLVTAIGLVRFYEEVEEKIKVP). The chain crosses the membrane as a helical span at residues 33–54 (PEAVIGAAFALSIMTIALDLLL). The Extracellular segment spans residues 55-58 (KAAR).

Belongs to the SEC61-beta family. Component of the protein translocase complex. Heterotrimer consisting of alpha (SecY), beta (SecG) and gamma (SecE) subunits. Can form oligomers of the heterotrimer.

It is found in the cell membrane. Involved in protein export. The function of the beta subunit is unknown, but it may be involved in stabilization of the trimeric complex. The polypeptide is Preprotein translocase subunit SecG (Ignicoccus hospitalis (strain KIN4/I / DSM 18386 / JCM 14125)).